The primary structure comprises 236 residues: 2-C-methyl-D-erythritol 4-phosphate cytidylyltransferase (236 aa).

The protein belongs to the IspD/TarI cytidylyltransferase family. IspD subfamily. In terms of assembly, homodimer.

It carries out the reaction 2-C-methyl-D-erythritol 4-phosphate + CTP + H(+) = 4-CDP-2-C-methyl-D-erythritol + diphosphate. The protein operates within isoprenoid biosynthesis; isopentenyl diphosphate biosynthesis via DXP pathway; isopentenyl diphosphate from 1-deoxy-D-xylulose 5-phosphate: step 2/6. Functionally, catalyzes the formation of 4-diphosphocytidyl-2-C-methyl-D-erythritol from CTP and 2-C-methyl-D-erythritol 4-phosphate (MEP). The polypeptide is 2-C-methyl-D-erythritol 4-phosphate cytidylyltransferase (Salmonella arizonae (strain ATCC BAA-731 / CDC346-86 / RSK2980)).